The following is a 216-amino-acid chain: DNA replication complex GINS protein psf1 (216 aa).

Positions glutamine 110–proline 133 are disordered. Residues threonine 111–threonine 127 are compositionally biased toward gly residues.

It belongs to the GINS1/PSF1 family. In terms of assembly, component of the GINS complex which is a heterotetramer of div-26/sld5, drc-1/psf1, drc-2/psf2 and drc-3/psf3.

The protein resides in the nucleus. The GINS complex plays an essential role in the initiation of DNA replication. The sequence is that of DNA replication complex GINS protein psf1 (drc-1) from Neurospora crassa (strain ATCC 24698 / 74-OR23-1A / CBS 708.71 / DSM 1257 / FGSC 987).